A 129-amino-acid chain; its full sequence is MELLPQGQRNNTQVTFEDQQKINEFSKLIMRKDAIAQELSLQREEKEYLDDVSLEIELIDEDEPVQYKVGDLFIFMKQSKVTAQLEKDAERLDNKIETLEDKQRDIDSRLDALKAILYAKFGDNINLER.

M1 carries the N-acetylmethionine modification.

The protein belongs to the prefoldin subunit beta family. In terms of assembly, heterohexamer of two PFD-alpha type and four PFD-beta type subunits.

In terms of biological role, binds specifically to cytosolic chaperonin (c-CPN) and transfers target proteins to it. Binds to nascent polypeptide chain and promotes folding in an environment in which there are many competing pathways for nonnative proteins. This is Prefoldin subunit 4 (GIM3) from Saccharomyces cerevisiae (strain ATCC 204508 / S288c) (Baker's yeast).